The sequence spans 545 residues: Propane 2-monooxygenase, hydroxylase component large subunit (545 aa).

6 residues coordinate Fe cation: Glu97, Glu127, His130, Glu192, Glu226, and His229.

It belongs to the TmoA/XamoA family. The propane 2-monooxygenase multicomponent enzyme system is composed of an electron transfer component and a monooxygenase component interacting with the effector protein PrmD. The electron transfer component is composed of a reductase (PrmB), and the monooxygenase component is formed by a large subunit (PrmA) and a small subunit (PrmC). Probably requires the presence of the chaperonin-like protein PrmG to ensure a productive folding, resulting of a soluble PrmA, which leads to the active form of PrmABCD. Requires Fe(2+) as cofactor.

The enzyme catalyses propane + NADH + O2 + H(+) = propan-2-ol + NAD(+) + H2O. It carries out the reaction phenol + NADH + O2 + H(+) = hydroquinone + NAD(+) + H2O. In terms of biological role, component of the propane 2-monooxygenase multicomponent enzyme system which is involved in the degradation of propane via the O2-dependent hydroxylation of propane. Under acetone induction, also able to catalyze the oxidation of phenol to yield hydroquinone. The chain is Propane 2-monooxygenase, hydroxylase component large subunit from Gordonia sp. (strain TY-5).